Consider the following 350-residue polypeptide: Biotin synthase (350 aa).

A Radical SAM core domain is found at 54–278 (REIQLSTLLS…TMPQSYVRLS (225 aa)). Residues Cys-69, Cys-73, and Cys-76 each coordinate [4Fe-4S] cluster. The [2Fe-2S] cluster site is built by Cys-113, Cys-144, Cys-204, and Arg-276.

This sequence belongs to the radical SAM superfamily. Biotin synthase family. Homodimer. The cofactor is [4Fe-4S] cluster. [2Fe-2S] cluster is required as a cofactor.

It carries out the reaction (4R,5S)-dethiobiotin + (sulfur carrier)-SH + 2 reduced [2Fe-2S]-[ferredoxin] + 2 S-adenosyl-L-methionine = (sulfur carrier)-H + biotin + 2 5'-deoxyadenosine + 2 L-methionine + 2 oxidized [2Fe-2S]-[ferredoxin]. The protein operates within cofactor biosynthesis; biotin biosynthesis; biotin from 7,8-diaminononanoate: step 2/2. Catalyzes the conversion of dethiobiotin (DTB) to biotin by the insertion of a sulfur atom into dethiobiotin via a radical-based mechanism. This is Biotin synthase from Neisseria meningitidis serogroup B (strain ATCC BAA-335 / MC58).